Reading from the N-terminus, the 628-residue chain is tRNA uridine 5-carboxymethylaminomethyl modification enzyme MnmG (628 aa).

FAD is bound at residue 14-19; the sequence is GAGHAG. Residue 274-288 participates in NAD(+) binding; the sequence is GPRYCPSIEDKIVRF.

This sequence belongs to the MnmG family. As to quaternary structure, homodimer. Heterotetramer of two MnmE and two MnmG subunits. Requires FAD as cofactor.

The protein localises to the cytoplasm. Functionally, NAD-binding protein involved in the addition of a carboxymethylaminomethyl (cmnm) group at the wobble position (U34) of certain tRNAs, forming tRNA-cmnm(5)s(2)U34. The chain is tRNA uridine 5-carboxymethylaminomethyl modification enzyme MnmG from Clostridium kluyveri (strain ATCC 8527 / DSM 555 / NBRC 12016 / NCIMB 10680 / K1).